The chain runs to 143 residues: Transcription antitermination protein NusB (143 aa).

The protein belongs to the NusB family.

Involved in transcription antitermination. Required for transcription of ribosomal RNA (rRNA) genes. Binds specifically to the boxA antiterminator sequence of the ribosomal RNA (rrn) operons. This is Transcription antitermination protein NusB from Methylacidiphilum infernorum (isolate V4) (Methylokorus infernorum (strain V4)).